Consider the following 450-residue polypeptide: MSTHVTFDYSKALSFIGEHEITYLRDAVKVTHHAIHEKTGAGNDFLGWVDLPLQYDKEEFARIQKCAEKIKNDSDILLVVGIGGSYLGARAAIEMLNHSFYNTLSKEQRKTPQVLFVGQNISSTYMKDLMDVLEGKDFSINVISKSGTTTEPALAFRIFRKLLEEKYGKEEARKRIYATTDKARGALKTLADNEGYETFVIPDDVGGRFSVLTPVGLLPIAVSGLNIEEMMKGAAAGHDDFGTSELEENPAYQYAVVRNALYNKGKTIEMLVNYEPALQYFAEWWKQLFGESEGKDQKGIFPSSANFSTDLHSLGQYVQEGRRDLFETVLKVGKSTHELTIESEENDLDGLNYLAGETVDFVNTKAYEGTLLAHSDGGVPNLIVNIPELNEYTFGYLVYFFEKACAMSGYLLGVNPFDQPGVEAYKKNMFALLGKPGFEELKAELEERLK.

At Thr-39 the chain carries Phosphothreonine. Glu-291 serves as the catalytic Proton donor. Active-site residues include His-312 and Lys-426.

This sequence belongs to the GPI family.

It localises to the cytoplasm. The enzyme catalyses alpha-D-glucose 6-phosphate = beta-D-fructose 6-phosphate. The protein operates within carbohydrate biosynthesis; gluconeogenesis. It functions in the pathway carbohydrate degradation; glycolysis; D-glyceraldehyde 3-phosphate and glycerone phosphate from D-glucose: step 2/4. Its function is as follows. Catalyzes the reversible isomerization of glucose-6-phosphate to fructose-6-phosphate. The protein is Glucose-6-phosphate isomerase of Bacillus cereus (strain G9842).